Reading from the N-terminus, the 123-residue chain is Large ribosomal subunit protein bL12 (123 aa).

The protein belongs to the bacterial ribosomal protein bL12 family. In terms of assembly, homodimer. Part of the ribosomal stalk of the 50S ribosomal subunit. Forms a multimeric L10(L12)X complex, where L10 forms an elongated spine to which 2 to 4 L12 dimers bind in a sequential fashion. Binds GTP-bound translation factors.

Its function is as follows. Forms part of the ribosomal stalk which helps the ribosome interact with GTP-bound translation factors. Is thus essential for accurate translation. This Marinomonas sp. (strain MWYL1) protein is Large ribosomal subunit protein bL12.